Consider the following 486-residue polypeptide: UDP-N-acetylmuramoyl-L-alanyl-D-glutamate--2,6-diaminopimelate ligase (486 aa).

S30 contributes to the UDP-N-acetyl-alpha-D-muramoyl-L-alanyl-D-glutamate binding site. Residue 112 to 118 participates in ATP binding; sequence GTNGKTT. Residues 154–155, S181, Q187, and R189 contribute to the UDP-N-acetyl-alpha-D-muramoyl-L-alanyl-D-glutamate site; that span reads TT. N6-carboxylysine is present on K221. Residues R378, 402 to 405, G455, and E459 contribute to the meso-2,6-diaminopimelate site; that span reads DNPR. The Meso-diaminopimelate recognition motif signature appears at 402-405; it reads DNPR.

This sequence belongs to the MurCDEF family. MurE subfamily. Requires Mg(2+) as cofactor. Post-translationally, carboxylation is probably crucial for Mg(2+) binding and, consequently, for the gamma-phosphate positioning of ATP.

The protein resides in the cytoplasm. The enzyme catalyses UDP-N-acetyl-alpha-D-muramoyl-L-alanyl-D-glutamate + meso-2,6-diaminopimelate + ATP = UDP-N-acetyl-alpha-D-muramoyl-L-alanyl-gamma-D-glutamyl-meso-2,6-diaminopimelate + ADP + phosphate + H(+). It functions in the pathway cell wall biogenesis; peptidoglycan biosynthesis. Its function is as follows. Catalyzes the addition of meso-diaminopimelic acid to the nucleotide precursor UDP-N-acetylmuramoyl-L-alanyl-D-glutamate (UMAG) in the biosynthesis of bacterial cell-wall peptidoglycan. This is UDP-N-acetylmuramoyl-L-alanyl-D-glutamate--2,6-diaminopimelate ligase from Cytophaga hutchinsonii (strain ATCC 33406 / DSM 1761 / CIP 103989 / NBRC 15051 / NCIMB 9469 / D465).